We begin with the raw amino-acid sequence, 361 residues long: uncharacterized protein (361 aa).

Residues M1–T19 form the signal peptide. At T20–N47 the chain is on the extracellular side. The N-linked (GlcNAc...) asparagine glycan is linked to N24. The helical transmembrane segment at L48–H68 threads the bilayer. Residues Y69–D361 lie on the Cytoplasmic side of the membrane. The segment covering A99 to L113 has biased composition (polar residues). Disordered regions lie at residues A99–K184, P209–R247, and Q295–R316. Over residues S114–S133 the composition is skewed to low complexity. Residues S141–N150 are compositionally biased toward polar residues. The segment covering V299–R308 has biased composition (low complexity).

It is found in the membrane. This is an uncharacterized protein from Homo sapiens (Human).